The chain runs to 1040 residues: Multidrug resistance protein MdtB (1040 aa).

The next 12 membrane-spanning stretches (helical) occupy residues 25–45 (LLMA…PVAA), 347–367 (LMLA…NIPA), 369–389 (IIPG…MVFL), 396–416 (LTLM…IVVI), 440–460 (IGFT…PLLF), 472–492 (FAVT…TLTP), 537–557 (WLTL…WIVI), 863–883 (LGST…VLGV), 888–908 (FIHP…ALLA), 910–930 (IIAG…LIGI), 968–988 (ILMT…STGV), and 998–1018 (IAMV…TPVI).

The protein belongs to the resistance-nodulation-cell division (RND) (TC 2.A.6) family. MdtB subfamily. In terms of assembly, part of a tripartite efflux system composed of MdtA, MdtB and MdtC. MdtB forms a heteromultimer with MdtC.

The protein resides in the cell inner membrane. The sequence is that of Multidrug resistance protein MdtB from Salmonella dublin (strain CT_02021853).